We begin with the raw amino-acid sequence, 510 residues long: Serine carboxypeptidase 1 (510 aa).

Residues 1–25 (MARRGRRSLASPAVAIALFVFLAYG) form the signal peptide. Residues 26–36 (GGGGGGGVCEA) constitute a propeptide that is removed on maturation. 3 disulfide bridges follow: Cys98-Cys399, Cys262-Cys274, and Cys297-Cys366. N-linked (GlcNAc...) asparagine glycosylation is present at Asn154. The active site involves Ser194. Asn268 is a glycosylation site (N-linked (GlcNAc...) asparagine). The propeptide at 303–362 (IKKVTPANTKLPKSFQHLGTTTKPLAVRTRMHGRAWPLRAPVRAGRVPSWQEFARGSRPS) is linker peptide. Asn418 carries an N-linked (GlcNAc...) asparagine glycan. Residues Asp434 and His487 contribute to the active site. Positions 508–510 (SKL) match the Microbody targeting signal motif.

It belongs to the peptidase S10 family.

The enzyme catalyses Release of a C-terminal amino acid with broad specificity.. In Oryza sativa subsp. japonica (Rice), this protein is Serine carboxypeptidase 1 (CBP1).